A 395-amino-acid polypeptide reads, in one-letter code: NADH-quinone oxidoreductase subunit D (395 aa).

This sequence belongs to the complex I 49 kDa subunit family. In terms of assembly, NDH-1 is composed of 14 different subunits. Subunits NuoB, C, D, E, F, and G constitute the peripheral sector of the complex.

The protein resides in the cell inner membrane. The enzyme catalyses a quinone + NADH + 5 H(+)(in) = a quinol + NAD(+) + 4 H(+)(out). Its function is as follows. NDH-1 shuttles electrons from NADH, via FMN and iron-sulfur (Fe-S) centers, to quinones in the respiratory chain. The immediate electron acceptor for the enzyme in this species is believed to be a menaquinone. Couples the redox reaction to proton translocation (for every two electrons transferred, four hydrogen ions are translocated across the cytoplasmic membrane), and thus conserves the redox energy in a proton gradient. This chain is NADH-quinone oxidoreductase subunit D, found in Chlorobium luteolum (strain DSM 273 / BCRC 81028 / 2530) (Pelodictyon luteolum).